A 363-amino-acid polypeptide reads, in one-letter code: Beta-1,3-N-acetylglucosaminyltransferase lunatic fringe (363 aa).

Residues 1–8 lie on the Cytoplasmic side of the membrane; sequence MLKSCGRK. A helical; Signal-anchor for type II membrane protein transmembrane segment spans residues 9–29; it reads LLLSLVGSMFTCLLVLMVEPP. At 30–363 the chain is on the lumenal side; it reads GRPGLARGEA…TPWCPSNVVY (334 aa). Arg113 is a substrate binding site. N-linked (GlcNAc...) asparagine glycosylation is present at Asn151. 2 disulfide bridges follow: Cys152-Cys163 and Cys181-Cys244. Asp185 contributes to the substrate binding site. Mn(2+) is bound at residue Asp186. Residue Asp274 is part of the active site. Residue His298 participates in Mn(2+) binding. A disulfide bridge connects residues Cys348 and Cys357.

Belongs to the glycosyltransferase 31 family. It depends on Mn(2+) as a cofactor. Co(2+) serves as cofactor. Post-translationally, a soluble form may be derived from the membrane form by proteolytic processing.

The protein resides in the golgi apparatus membrane. The enzyme catalyses 3-O-(alpha-L-fucosyl)-L-threonyl-[EGF-like domain protein] + UDP-N-acetyl-alpha-D-glucosamine = 3-O-(N-acetyl-beta-D-glucosaminyl-(1-&gt;3)-alpha-L-fucosyl)-L-threonyl-[EGF-like domain protein] + UDP + H(+). It catalyses the reaction 3-O-(alpha-L-fucosyl)-L-seryl-[EGF-like domain protein] + UDP-N-acetyl-alpha-D-glucosamine = 3-O-(N-acetyl-beta-D-glucosaminyl-(1-&gt;3)-alpha-L-fucosyl)-L-seryl-[EGF-like domain protein] + UDP + H(+). Glycosyltransferase that initiates the elongation of O-linked fucose residues attached to EGF-like repeats in the extracellular domain of Notch molecules. Essential mediator of somite segmentation and patterning. This is Beta-1,3-N-acetylglucosaminyltransferase lunatic fringe (LFNG) from Gallus gallus (Chicken).